A 346-amino-acid chain; its full sequence is Heat-inducible transcription repressor HrcA (346 aa).

The protein belongs to the HrcA family.

In terms of biological role, negative regulator of class I heat shock genes (grpE-dnaK-dnaJ and groELS operons). Prevents heat-shock induction of these operons. The chain is Heat-inducible transcription repressor HrcA from Erythrobacter litoralis (strain HTCC2594).